The chain runs to 484 residues: Putative amidase AmiA2 (484 aa).

Residues Lys93 and Ser167 each act as charge relay system in the active site. Ser191 acts as the Acyl-ester intermediate in catalysis.

Belongs to the amidase family.

It carries out the reaction a monocarboxylic acid amide + H2O = a monocarboxylate + NH4(+). In Mycobacterium bovis (strain ATCC BAA-935 / AF2122/97), this protein is Putative amidase AmiA2 (amiA2).